A 478-amino-acid polypeptide reads, in one-letter code: Zinc metalloproteinase/disintegrin (478 aa).

The first 20 residues, 1–20 (MIQVLLVTICLAAFPYQGSS), serve as a signal peptide directing secretion. A propeptide spanning residues 21–187 (IILESGNVND…PIKKASDLNL (167 aa)) is cleaved from the precursor. The region spanning 193–389 (RYVELFIVVD…QKPQCILKKP (197 aa)) is the Peptidase M12B domain. 3 disulfides stabilise this stretch: cysteine 304-cysteine 384, cysteine 344-cysteine 368, and cysteine 346-cysteine 351. Histidine 329 contributes to the Zn(2+) binding site. The active site involves glutamate 330. The Zn(2+) site is built by histidine 333 and histidine 339. The propeptide occupies 390–407 (LRTDTVSTPVSGNELLEA). In terms of domain architecture, Disintegrin spans 397–478 (TPVSGNELLE…ADCPRNGLYG (82 aa)). 6 disulfides stabilise this stretch: cysteine 411–cysteine 426, cysteine 413–cysteine 421, cysteine 420–cysteine 443, cysteine 434–cysteine 440, cysteine 439–cysteine 464, and cysteine 452–cysteine 471. Residues 456-458 (MVD) carry the Cell attachment site; atypical (MVD) motif.

It belongs to the venom metalloproteinase (M12B) family. P-II subfamily. P-IIa sub-subfamily. As to quaternary structure, monomer (disintegrin). Zn(2+) serves as cofactor. Expressed by the venom gland.

It localises to the secreted. It carries out the reaction Cleavage of 3-Asn-|-Gln-4, 9-Ser-|-His-10 and 14-Ala-|-Leu-15 bonds in insulin B chain and 14-Tyr-|-Gln-15 and 8-Thr-|-Ser-9 in A chain. Cleaves type IV collagen at 73-Ala-|-Gln-74 in alpha1-(IV) and at 7-Gly-|-Leu-8 in alpha2-(IV).. Snake venom zinc metalloproteinase that causes hemorrhage by provoking the degradation of the sub-endothelial matrix proteins (fibronectin, laminin, type IV collagen, nidogen, and gelatins). In terms of biological role, potent inhibitor of both collagen- (IC(50)=4 nM) and ADP-induced (IC(50)=8 nM) platelet aggregation. May act by binding to the platelet receptor GPIIb/GPIIIa (ITGA2B/ITGB3). In Crotalus atrox (Western diamondback rattlesnake), this protein is Zinc metalloproteinase/disintegrin.